The primary structure comprises 200 residues: ATP-dependent Clp protease proteolytic subunit 1 (200 aa).

Ser-98 acts as the Nucleophile in catalysis. His-123 is an active-site residue.

It belongs to the peptidase S14 family. Fourteen ClpP subunits assemble into 2 heptameric rings which stack back to back to give a disk-like structure with a central cavity, resembling the structure of eukaryotic proteasomes.

The protein resides in the cytoplasm. The catalysed reaction is Hydrolysis of proteins to small peptides in the presence of ATP and magnesium. alpha-casein is the usual test substrate. In the absence of ATP, only oligopeptides shorter than five residues are hydrolyzed (such as succinyl-Leu-Tyr-|-NHMec, and Leu-Tyr-Leu-|-Tyr-Trp, in which cleavage of the -Tyr-|-Leu- and -Tyr-|-Trp bonds also occurs).. Its function is as follows. Cleaves peptides in various proteins in a process that requires ATP hydrolysis. Has a chymotrypsin-like activity. Plays a major role in the degradation of misfolded proteins. The chain is ATP-dependent Clp protease proteolytic subunit 1 from Mycobacterium bovis (strain ATCC BAA-935 / AF2122/97).